We begin with the raw amino-acid sequence, 954 residues long: Endogenous retrovirus group K member 25 Pol protein (954 aa).

The region spanning 57–245 (LEKGHIEPSF…TPFHYLGMQI (189 aa)) is the Reverse transcriptase domain. Positions 161–164 (LPQG) match the LPQG motif. A YXDD motif is present at residues 195–198 (YIDD). The region spanning 460-588 (LENALTVFTD…ADLLVSSALI (129 aa)) is the RNase H type-1 domain. The Mg(2+) site is built by Asp469, Glu497, Asp515, and Asp580. The Integrase-type zinc-finger motif lies at 585 to 626 (SALIKAQELHALTHVNAAGLKNKFDVTWKLAKDIVQHCTQCQ). 4 residues coordinate Zn(2+): His594, His598, Cys622, and Cys625. One can recognise an Integrase catalytic domain in the interval 640 to 801 (RGLCPNALWQ…TSAEQHLTGK (162 aa)). The segment at residues 809–857 (KLIWWKDNKNKTWEIGKVITWGRGFACVSPGENQLPVWIPTRHLKFYNE) is a DNA-binding region (integrase-type). Residues 862 to 888 (AKKSTSAETETPQSSTVDSQDEQNGDV) form a disordered region. Residues 867–879 (SAETETPQSSTVD) are compositionally biased toward polar residues.

It belongs to the beta type-B retroviral polymerase family. HERV class-II K(HML-2) pol subfamily.

The enzyme catalyses DNA(n) + a 2'-deoxyribonucleoside 5'-triphosphate = DNA(n+1) + diphosphate. The catalysed reaction is Endonucleolytic cleavage to 5'-phosphomonoester.. In terms of biological role, early post-infection, the reverse transcriptase converts the viral RNA genome into double-stranded viral DNA. The RNase H domain of the reverse transcriptase performs two functions. It degrades the RNA template and specifically removes the RNA primer from the RNA/DNA hybrid. Following nuclear import, the integrase catalyzes the insertion of the linear, double-stranded viral DNA into the host cell chromosome. Endogenous Pol proteins may have kept, lost or modified their original function during evolution. This chain is Endogenous retrovirus group K member 25 Pol protein (ERVK-25), found in Homo sapiens (Human).